A 255-amino-acid polypeptide reads, in one-letter code: Triosephosphate isomerase (255 aa).

Position 9-11 (9-11) interacts with substrate; the sequence is NWK. The Electrophile role is filled by H95. The active-site Proton acceptor is the E167. Substrate-binding positions include G173, S212, and 233-234; that span reads GG.

It belongs to the triosephosphate isomerase family. Homodimer.

The protein resides in the cytoplasm. It catalyses the reaction D-glyceraldehyde 3-phosphate = dihydroxyacetone phosphate. It functions in the pathway carbohydrate biosynthesis; gluconeogenesis. The protein operates within carbohydrate degradation; glycolysis; D-glyceraldehyde 3-phosphate from glycerone phosphate: step 1/1. Involved in the gluconeogenesis. Catalyzes stereospecifically the conversion of dihydroxyacetone phosphate (DHAP) to D-glyceraldehyde-3-phosphate (G3P). This Sodalis glossinidius (strain morsitans) protein is Triosephosphate isomerase.